The sequence spans 596 residues: Elongation factor 4 (596 aa).

The 182-residue stretch at K2–V183 folds into the tr-type G domain. GTP-binding positions include D14–T19 and N130–D133.

It belongs to the TRAFAC class translation factor GTPase superfamily. Classic translation factor GTPase family. LepA subfamily.

The protein resides in the cell inner membrane. It catalyses the reaction GTP + H2O = GDP + phosphate + H(+). Functionally, required for accurate and efficient protein synthesis under certain stress conditions. May act as a fidelity factor of the translation reaction, by catalyzing a one-codon backward translocation of tRNAs on improperly translocated ribosomes. Back-translocation proceeds from a post-translocation (POST) complex to a pre-translocation (PRE) complex, thus giving elongation factor G a second chance to translocate the tRNAs correctly. Binds to ribosomes in a GTP-dependent manner. This is Elongation factor 4 from Sulfurimonas denitrificans (strain ATCC 33889 / DSM 1251) (Thiomicrospira denitrificans (strain ATCC 33889 / DSM 1251)).